Here is a 404-residue protein sequence, read N- to C-terminus: Probable tRNA sulfurtransferase (404 aa).

The THUMP domain maps to 61-166 (EAVSERLKDV…SGYSYIMCDE (106 aa)). Residues 184 to 185 (LL), 209 to 210 (HF), Arg-266, Gly-288, and Gln-297 contribute to the ATP site.

It belongs to the ThiI family.

It is found in the cytoplasm. The enzyme catalyses [ThiI sulfur-carrier protein]-S-sulfanyl-L-cysteine + a uridine in tRNA + 2 reduced [2Fe-2S]-[ferredoxin] + ATP + H(+) = [ThiI sulfur-carrier protein]-L-cysteine + a 4-thiouridine in tRNA + 2 oxidized [2Fe-2S]-[ferredoxin] + AMP + diphosphate. The catalysed reaction is [ThiS sulfur-carrier protein]-C-terminal Gly-Gly-AMP + S-sulfanyl-L-cysteinyl-[cysteine desulfurase] + AH2 = [ThiS sulfur-carrier protein]-C-terminal-Gly-aminoethanethioate + L-cysteinyl-[cysteine desulfurase] + A + AMP + 2 H(+). The protein operates within cofactor biosynthesis; thiamine diphosphate biosynthesis. In terms of biological role, catalyzes the ATP-dependent transfer of a sulfur to tRNA to produce 4-thiouridine in position 8 of tRNAs, which functions as a near-UV photosensor. Also catalyzes the transfer of sulfur to the sulfur carrier protein ThiS, forming ThiS-thiocarboxylate. This is a step in the synthesis of thiazole, in the thiamine biosynthesis pathway. The sulfur is donated as persulfide by IscS. The polypeptide is Probable tRNA sulfurtransferase (Bacillus cereus (strain AH820)).